We begin with the raw amino-acid sequence, 394 residues long: Argininosuccinate synthase (394 aa).

ATP is bound by residues 7 to 15 (AYSGGLDTS) and Ala35. Tyr85 lines the L-citrulline pocket. Gly115 provides a ligand contact to ATP. L-aspartate contacts are provided by Thr117, Asn121, and Asp122. L-citrulline is bound at residue Asn121. Positions 125, 174, 183, 258, and 270 each coordinate L-citrulline.

Belongs to the argininosuccinate synthase family. Type 1 subfamily. In terms of assembly, homotetramer.

Its subcellular location is the cytoplasm. It carries out the reaction L-citrulline + L-aspartate + ATP = 2-(N(omega)-L-arginino)succinate + AMP + diphosphate + H(+). It functions in the pathway amino-acid biosynthesis; L-arginine biosynthesis; L-arginine from L-ornithine and carbamoyl phosphate: step 2/3. The protein is Argininosuccinate synthase of Methanopyrus kandleri (strain AV19 / DSM 6324 / JCM 9639 / NBRC 100938).